The primary structure comprises 69 residues: Alpha-elapitoxin-Lc2c (69 aa).

Cystine bridges form between Cys-3–Cys-20, Cys-13–Cys-41, Cys-45–Cys-56, and Cys-57–Cys-62.

This sequence belongs to the three-finger toxin family. Long-chain subfamily. Type II alpha-neurotoxin sub-subfamily. Expressed by the venom gland.

The protein localises to the secreted. Binds with high affinity to muscular nicotinic acetylcholine receptors (nAChRs), whereas it binds with a low affinity to neuronal alpha-7/CHRNA7 nAChRs. The protein is Alpha-elapitoxin-Lc2c of Laticauda colubrina (Yellow-lipped sea krait).